A 260-amino-acid polypeptide reads, in one-letter code: tRNA (guanine-N(1)-)-methyltransferase (260 aa).

S-adenosyl-L-methionine is bound by residues Gly117 and 137–142; that span reads LGDFVL.

The protein belongs to the RNA methyltransferase TrmD family. In terms of assembly, homodimer.

The protein localises to the cytoplasm. The enzyme catalyses guanosine(37) in tRNA + S-adenosyl-L-methionine = N(1)-methylguanosine(37) in tRNA + S-adenosyl-L-homocysteine + H(+). Specifically methylates guanosine-37 in various tRNAs. This Cupriavidus metallidurans (strain ATCC 43123 / DSM 2839 / NBRC 102507 / CH34) (Ralstonia metallidurans) protein is tRNA (guanine-N(1)-)-methyltransferase.